Here is a 56-residue protein sequence, read N- to C-terminus: MQAPDSVRSVKVEREAKTWIEKPRGAGLRVAQKTPVHATTSLTLGTVVHLAFIILP.

This is an uncharacterized protein from Homo sapiens (Human).